We begin with the raw amino-acid sequence, 349 residues long: MAEEKVLEVKNLHVNFHTYAGDVKAIRNVSFDLEKGQTLAIVGESGSGKSVTTKTLMGLNAKNAEIPEGELLFKGRNLLDLKEEEWQKIRGNEISMIFQDPMTSLDPTMRIGKQIAEPLLKHNKGMSKADAMKRALELMQQVGIPDAEVHINDYPHQWSGGMRQRAVIAIALAADPEILIADEPTTALDVTIQAQIMHMMAELQERINSSIVFITHDLGVVAGFAHKVAVMYAGEIVEYGTVEEIFYNPQHPYTWGLLDSMPTVDSSVDRLVSIPGTPPDLLNPPKGDAFAARNKFALAIDFEEEPPYFEVSPTHFAKTWLLDPRAPKVTPSDNILARWKRWEELKGDK.

Residues 7–258 (LEVKNLHVNF…PQHPYTWGLL (252 aa)) form the ABC transporter domain. ATP is bound at residue 43–50 (GESGSGKS).

This sequence belongs to the ABC transporter superfamily. As to quaternary structure, the complex is composed of two ATP-binding proteins (DppD and DppF), two transmembrane proteins (DppB and DppC) and a solute-binding protein (DppA).

The protein localises to the cell membrane. The enzyme catalyses a dipeptide(out) + ATP + H2O = a dipeptide(in) + ADP + phosphate + H(+). Its function is as follows. Part of the ABC transporter DppABCDF involved in dipeptide transport. Responsible for energy coupling to the transport system. The protein is Dipeptide transport ATP-binding protein DppD of Lactococcus lactis subsp. cremoris (strain MG1363).